The sequence spans 383 residues: Gamma-butyrobetaine dioxygenase (383 aa).

The Zn(2+) site is built by Cys46, Cys48, Cys51, and His91. Fe cation contacts are provided by His209, Asp211, and His350.

The protein belongs to the gamma-BBH/TMLD family. In terms of assembly, homodimer. Fe(2+) is required as a cofactor. The cofactor is L-ascorbate.

Its subcellular location is the cytoplasm. It carries out the reaction 4-(trimethylamino)butanoate + 2-oxoglutarate + O2 = carnitine + succinate + CO2. It functions in the pathway amine and polyamine biosynthesis; carnitine biosynthesis. In terms of biological role, catalyzes the formation of L-carnitine from gamma-butyrobetaine. The protein is Gamma-butyrobetaine dioxygenase of Pseudomonas sp. (strain AK-1).